Here is a 310-residue protein sequence, read N- to C-terminus: MSNNIYKIVSLYSFFSFQENSIIELKENLFSIEKNNDLSGLLIIAREGLNGTVCAEEGIIENILKLIKNIVGNNKLNIKVSYSKKKIFKKLKIKIKDEIVTMGVPEINPSEDSGTYIDSFSWNKLIKDKNTIVVDTRNHYEVSIGSFKKSINPNTENFSEFPEWVDDNLGKYIGDDDSKNIAMFCTGGIRCEKATSLLKKKGYKNIFHLQGGILKYLEDMSKEESLFEGECFVFDKRVALDHELKQGSYSICHACGMPISIEDQKNKEYREGIQCHFCVNKFSDNDRKRFEERQKQINKLKDKNQKVYKD.

One can recognise a Rhodanese domain in the interval 127–225; sequence KDKNTIVVDT…YLEDMSKEES (99 aa). Cys185 (cysteine persulfide intermediate) is an active-site residue.

Belongs to the TrhO family.

It catalyses the reaction uridine(34) in tRNA + AH2 + O2 = 5-hydroxyuridine(34) in tRNA + A + H2O. Functionally, catalyzes oxygen-dependent 5-hydroxyuridine (ho5U) modification at position 34 in tRNAs. This is tRNA uridine(34) hydroxylase from Prochlorococcus marinus subsp. pastoris (strain CCMP1986 / NIES-2087 / MED4).